Here is a 503-residue protein sequence, read N- to C-terminus: Glycerol kinase (503 aa).

Residue Thr14 participates in ADP binding. ATP-binding residues include Thr14, Thr15, and Ser16. Thr14 contributes to the sn-glycerol 3-phosphate binding site. Arg18 provides a ligand contact to ADP. Sn-glycerol 3-phosphate-binding residues include Arg84, Glu85, Tyr136, and Asp246. Glycerol-binding residues include Arg84, Glu85, Tyr136, Asp246, and Gln247. Residues Thr268 and Gly311 each contribute to the ADP site. ATP contacts are provided by Thr268, Gly311, Gln315, and Gly412. Residues Gly412 and Asn416 each coordinate ADP.

Belongs to the FGGY kinase family. In terms of assembly, homotetramer and homodimer (in equilibrium). Heterodimer with EIIA-Glc. Binds 1 zinc ion per glycerol kinase EIIA-Glc dimer. The zinc ion is important for dimerization.

The catalysed reaction is glycerol + ATP = sn-glycerol 3-phosphate + ADP + H(+). The protein operates within polyol metabolism; glycerol degradation via glycerol kinase pathway; sn-glycerol 3-phosphate from glycerol: step 1/1. With respect to regulation, activity of this regulatory enzyme is affected by several metabolites. Allosterically and non-competitively inhibited by fructose 1,6-bisphosphate (FBP) and unphosphorylated phosphocarrier protein EIIA-Glc (III-Glc), an integral component of the bacterial phosphotransferase (PTS) system. In terms of biological role, key enzyme in the regulation of glycerol uptake and metabolism. Catalyzes the phosphorylation of glycerol to yield sn-glycerol 3-phosphate. This Klebsiella pneumoniae subsp. pneumoniae (strain ATCC 700721 / MGH 78578) protein is Glycerol kinase.